We begin with the raw amino-acid sequence, 213 residues long: Orotate phosphoribosyltransferase (213 aa).

A 5-phospho-alpha-D-ribose 1-diphosphate-binding site is contributed by lysine 25. 33–34 (FF) serves as a coordination point for orotate. 5-phospho-alpha-D-ribose 1-diphosphate contacts are provided by residues 71–72 (YK), arginine 98, lysine 99, lysine 102, histidine 104, and 124–132 (DDVITSGTA). Threonine 128 and arginine 156 together coordinate orotate.

It belongs to the purine/pyrimidine phosphoribosyltransferase family. PyrE subfamily. As to quaternary structure, homodimer. It depends on Mg(2+) as a cofactor.

It catalyses the reaction orotidine 5'-phosphate + diphosphate = orotate + 5-phospho-alpha-D-ribose 1-diphosphate. Its pathway is pyrimidine metabolism; UMP biosynthesis via de novo pathway; UMP from orotate: step 1/2. Its function is as follows. Catalyzes the transfer of a ribosyl phosphate group from 5-phosphoribose 1-diphosphate to orotate, leading to the formation of orotidine monophosphate (OMP). This is Orotate phosphoribosyltransferase from Buchnera aphidicola subsp. Acyrthosiphon pisum (strain 5A).